Here is a 1217-residue protein sequence, read N- to C-terminus: METSSISTVEDKPPQHQVFINFRGADLRRRFVSHLVTALKLNNINVFIDDYEDRGQPLDVLLKRIEESKIVLAIFSGNYTESVWCVRELEKIKDCTDEGTLVAIPIFYKLEPSTVRDLKGKFGDRFRSMAKGDERKKKWKEAFNLIPNIMGIIIDKKSVESEKVNEIVKAVKTALTGIPPEGSHNAVVGALGNSDAGTSSGDKKHETFGNEQRLKDLEEKLDRDKYKGTRIIGVVGMPGIGKTTLLKELYKTWQGKFSRHALIDQIRVKSKHLELDRLPQMLLGELSKLNNPHVDNLKDPYSQLHERKVLVVLDDVSKREQIDALREILDWIKEGKEGSRVVIATSDMSLTNGLVDDTYMVQNLNHRDSLQLFHYHAFIDDQANPQKKDFMKLSEGFVHYARGHPLALKVLGGELNKKSMDHWNSKMKKLAQSPSPNIVSVFQVSYDELTTAQKDAFLDIACFRSQDKDYVESLLASSDLGSAEAMSAVKSLTDKFLINTCDGRVEMHDLLYKFSREVDLKASNQDGSRQRRLWLHQHIIKGGIINVLQNKMKAANVRGIFLDLSEVEDETSLDRDHFINMGNLRYLKFYNSHCPQECKTNNKINIPDKLKLPLKEVRCLHWLKFPLETLPNDFNPINLVDLKLPYSEMEQLWEGDKDTPCLRWVDLNHSSKLCSLSGLSKAEKLQRLNLEGCTTLKAFPHDMKKMKMLAFLNLKGCTSLESLPEMNLISLKTLTLSGCSTFKEFPLISDNIETLYLDGTAISQLPMNMEKLQRLVVLNMKDCKMLEEIPGRVGELKALQELILSDCLNLKIFPEIDISFLNILLLDGTAIEVMPQLPSVQYLCLSRNAKISCLPVGISQLSQLKWLDLKYCTSLTSVPEFPPNLQCLDAHGCSSLKTVSKPLARIMPTEQNHSTFIFTNCENLEQAAKEEITSYAQRKCQLLSYARKRHNGGLVSESLFSTCFPGCEVPSWFCHETVGSELEVKLLPHWHDKKLAGIALCAVVSCLDPQDQVSRLSVTCTFKVKDEDKSWVPYTCPVGSWTRHGGGKDKIELDHVFIGYTSCPHTIKCHEEGNSDECNPTEASLKFTVTGGTSENGKYKVLKCGLSLVYAKDKDKNSALETKYDMLIGKSFQETSEGVDGRVKKTKGKYVMPVEKNFQETTEGVDGRVKKKKKTRMDNGRPKKKQRSGRDDNQTRMQVELQEGNINSVIMHTVKNF.

The 162-residue stretch at 14 to 175 (PQHQVFINFR…EIVKAVKTAL (162 aa)) folds into the TIR domain. Glutamate 88 is an active-site residue. The 262-residue stretch at 211–472 (EQRLKDLEEK…FRSQDKDYVE (262 aa)) folds into the NB-ARC domain. 11 LRR repeats span residues 260–285 (HALI…LLGE), 436–459 (PNIV…AFLD), 614–636 (LKEV…DFNP), 637–659 (INLV…DKDT), 682–706 (AEKL…MKKM), 708–728 (MLAF…EMNL), 729–749 (ISLK…PLIS), 750–774 (DNIE…KLQR), 796–818 (LKAL…EIDI), 819–842 (SFLN…SVQY), and 861–887 (LSQL…NLQC). The disordered stretch occupies residues 1162 to 1195 (TEGVDGRVKKKKKTRMDNGRPKKKQRSGRDDNQT). Positions 1170–1177 (KKKKKTRM) match the Nuclear localization signal motif.

Interacts with EDS1.

It localises to the nucleus. It carries out the reaction NAD(+) + H2O = ADP-D-ribose + nicotinamide + H(+). The polypeptide is Inactive disease resistance protein RPS4 (RPS4) (Arabidopsis thaliana (Mouse-ear cress)).